A 44-amino-acid polypeptide reads, in one-letter code: Photosystem I reaction center subunit IX (44 aa).

The chain crosses the membrane as a helical span at residues 7-27; it reads YLSTAPVLAISWLIFVAGLLI.

The protein belongs to the PsaJ family.

It localises to the plastid. It is found in the chloroplast thylakoid membrane. Functionally, may help in the organization of the PsaE and PsaF subunits. This chain is Photosystem I reaction center subunit IX, found in Larix decidua (European larch).